A 147-amino-acid polypeptide reads, in one-letter code: NADH-quinone oxidoreductase subunit A (147 aa).

The next 3 helical transmembrane spans lie at 16 to 36 (FAIF…GGWF), 68 to 88 (FYLV…LFAW), and 98 to 118 (VGFV…VYLV).

This sequence belongs to the complex I subunit 3 family. NDH-1 is composed of 13 different subunits. Subunits NuoA, H, J, K, L, M, N constitute the membrane sector of the complex.

It is found in the cell inner membrane. It carries out the reaction a quinone + NADH + 5 H(+)(in) = a quinol + NAD(+) + 4 H(+)(out). In terms of biological role, NDH-1 shuttles electrons from NADH, via FMN and iron-sulfur (Fe-S) centers, to quinones in the respiratory chain. The immediate electron acceptor for the enzyme in this species is believed to be ubiquinone. Couples the redox reaction to proton translocation (for every two electrons transferred, four hydrogen ions are translocated across the cytoplasmic membrane), and thus conserves the redox energy in a proton gradient. The chain is NADH-quinone oxidoreductase subunit A from Shigella boydii serotype 18 (strain CDC 3083-94 / BS512).